The chain runs to 593 residues: Myc box-dependent-interacting protein 1 (593 aa).

Residue alanine 2 is modified to N-acetylalanine. Residues 2–122 are interaction with BIN2; it reads AEMGSKGVTA…DYHQKLVDQA (121 aa). Coiled-coil stretches lie at residues 15 to 42 and 193 to 267; these read ASNV…TKDE and HLVA…NDVL. The region spanning 29-276 is the BAR domain; the sequence is VLQKLGKADE…LVGLEKQHGS (248 aa). Disordered stretches follow at residues 280–354 and 400–488; these read TVKA…KEVK and PVTS…AASS. A phosphoserine mark is found at serine 296, serine 298, and serine 303. Residues threonine 307 and threonine 323 each carry the phosphothreonine modification. Phosphoserine is present on serine 331. A clathrin-binding region spans residues 378–421; that stretch reads FEAPGPFSEQASLLDLDFDPLPPVTSPVKAPTPSGQSIPWDLWE. Positions 520-593 constitute an SH3 domain; that stretch reads GFMFKVQAQH…FPENFTERVP (74 aa).

In terms of assembly, heterodimer with AMPH. Binds SH3GLB1. Interacts (via SH3 domain) with DNM1. Interacts with SYNJ1. Interacts (via SH3 domain) with DNM2. Isoform IIA interacts with CLTC. Isoform IIB does not interact with CLTC. Isoform IIC1 does not interact with CLTC. Isoform IIC2 does not interact with CLTC. Interacts with AP2A2. Interacts with AP2B1. Interacts with MYC (via N-terminal transactivation domain); the interaction requires the integrity of the conserved MYC box regions 1 and 2. Interacts with BIN2. Interacts with SNX4. Interacts (via BAR domain) with BACE1. Binds (via BAR domain) F-actin. As to quaternary structure, (Microbial infection) Interacts (SH3 domain) with HCV NS5A. Phosphorylated by protein kinase C. In terms of tissue distribution, ubiquitous. Highest expression in the brain and muscle. Expressed in oligodendrocytes. Isoform IIA is expressed only in the brain, where it is detected in the gray matter, but not in the white matter. Isoform BIN1 is widely expressed with highest expression in skeletal muscle.

It localises to the nucleus. The protein resides in the cytoplasm. Its subcellular location is the endosome. It is found in the cell membrane. The protein localises to the sarcolemma. It localises to the T-tubule. Its function is as follows. Is a key player in the control of plasma membrane curvature, membrane shaping and membrane remodeling. Required in muscle cells for the formation of T-tubules, tubular invaginations of the plasma membrane that function in depolarization-contraction coupling. Is a negative regulator of endocytosis. Is also involved in the regulation of intracellular vesicles sorting, modulation of BACE1 trafficking and the control of amyloid-beta production. In neuronal circuits, endocytosis regulation may influence the internalization of PHF-tau aggregates. May be involved in the regulation of MYC activity and the control cell proliferation. Has actin bundling activity and stabilizes actin filaments against depolymerization in vitro. The protein is Myc box-dependent-interacting protein 1 (BIN1) of Homo sapiens (Human).